A 360-amino-acid polypeptide reads, in one-letter code: Glycerol-3-phosphate dehydrogenase [NAD(+)], cytoplasmic (360 aa).

Residues 11–16 (GSGNWG), phenylalanine 98, lysine 121, and alanine 155 each bind NAD(+). Lysine 121 serves as a coordination point for substrate. Lysine 206 functions as the Proton acceptor in the catalytic mechanism. Arginine 270 and glutamine 299 together coordinate NAD(+). A substrate-binding site is contributed by 270–271 (RN).

This sequence belongs to the NAD-dependent glycerol-3-phosphate dehydrogenase family. As to quaternary structure, homodimer.

The protein localises to the cytoplasm. The catalysed reaction is sn-glycerol 3-phosphate + NAD(+) = dihydroxyacetone phosphate + NADH + H(+). It participates in phospholipid metabolism; alpha-glycerophosphate cycle. This Drosophila kanekoi (Fruit fly) protein is Glycerol-3-phosphate dehydrogenase [NAD(+)], cytoplasmic (Gpdh1).